A 198-amino-acid chain; its full sequence is MDFYPVAIEKLIEEFAKLPGIGRKTAQRLTLHVLNLPADEVREFAKALVKARGTIKYCSICGNFTDSDPCAICSNPNRDKSIICVIEEPKDIMSMERIKEYNGVYHVLHGNISPMAGRGPEDIKLRELIRRINGDVNEVIVATNPNVEGEATAMYISKILKHLGVKVTRIAHGIPVGGNLEYADEVTLLKALEGRTEI.

The C4-type zinc-finger motif lies at 58–73 (CSICGNFTDSDPCAIC). Positions 81–175 (SIICVIEEPK…KVTRIAHGIP (95 aa)) constitute a Toprim domain.

It belongs to the RecR family.

Its function is as follows. May play a role in DNA repair. It seems to be involved in an RecBC-independent recombinational process of DNA repair. It may act with RecF and RecO. The sequence is that of Recombination protein RecR from Clostridium kluyveri (strain NBRC 12016).